The chain runs to 202 residues: ATP-dependent Clp protease proteolytic subunit (202 aa).

Ser98 (nucleophile) is an active-site residue. The active site involves His123.

This sequence belongs to the peptidase S14 family. As to quaternary structure, fourteen ClpP subunits assemble into 2 heptameric rings which stack back to back to give a disk-like structure with a central cavity, resembling the structure of eukaryotic proteasomes.

It is found in the cytoplasm. The enzyme catalyses Hydrolysis of proteins to small peptides in the presence of ATP and magnesium. alpha-casein is the usual test substrate. In the absence of ATP, only oligopeptides shorter than five residues are hydrolyzed (such as succinyl-Leu-Tyr-|-NHMec, and Leu-Tyr-Leu-|-Tyr-Trp, in which cleavage of the -Tyr-|-Leu- and -Tyr-|-Trp bonds also occurs).. Cleaves peptides in various proteins in a process that requires ATP hydrolysis. Has a chymotrypsin-like activity. Plays a major role in the degradation of misfolded proteins. This chain is ATP-dependent Clp protease proteolytic subunit, found in Syntrophobacter fumaroxidans (strain DSM 10017 / MPOB).